A 1033-amino-acid chain; its full sequence is MKKVDVKESAVGRETRIRKQWNEQSIFEQSIQNREGAQSFVFYEGPPTANGLPHVGHALGRTIKDVVARYKTMAGYKVLRKAGWDTHGLPVELGVEKQLGISGKHEIEEYGIEPFIKKCKESVFTYEKQWREFTESIGYWVDMDDPYVTLENPYIESVWHILGTIHEKGLLYKGHRVSPYCPSCQTSLSSHEVAQGYKTVKDLSATVKFKVKDSENEYFLGWTTTPWTLPANVALAVHPNMEYVKAKQEGHVYIVAKERVQDVLKENYEVLSVHKGEELLNISYTAPFPMKEVTNGYRVIGADFVTADSGTGLVHIAPAYGEDDYRVVQSEGLSFLHVVDEKGEYTEAVPFLKGKFVKDCDVDIVRYLAKEGLLYHKEKYEHSYPHCWRCDSPLLYYAGESWLIRTTAIKDTFLQNNDSVTWYPDHMKHGRFGKFLENMVDWNISRNRYWGTPLNVWECESCDHQFAPKSIDDLRKHSTKETQEDLELHKPYVDEVQVCCEKCGGTMTRTPEVIDVWFDSGSMPFAQYHYPFENKELFEEQFPADVIAEGIDQTRGWFYSLLAVSALYTGKVPYKRVLSLGHVLDEEGQKMSKSKGNALDPVDLVNQFGADALRWALLVDSAPWNAKRFSERTVLEAKSKFVDTLVNVYSFYVLYANLDEYNPNETYDVKRTKLDEWVLSRLHSTTKKVRIALDDYQFTNAAREIAALVDEVSNWYVRRSRNRFWESGMNAEKAAAYETLHDVLVTISKLIAPFTPFVAEDIHLNLTGSSVHLEDYPVVNESLLQPKLEAEMNAVLQVVELGRSNRNQHSLKVKQPLAELVLLEHNENDMDWESYRDIVMDELNVKAFHVELDETKYTSYQLKLNFKTAGPKFGKNVNAVNGWLKQLSQDEVQNFVSTERAVYEVASGEEIVVTTEDVLVEKVAKSGFSNTTNGQYTVMLDTNVTEELLQEGVAREFIRAVQEYRKQLNLPVNLRVDVILDTEEELQQTLTNHKELLEENLLVKQFTFGHLTNEDDELSLGETKVRIKLSATK.

Positions 47–57 match the 'HIGH' region motif; sequence PTANGLPHVGH. Positions 590–594 match the 'KMSKS' region motif; that stretch reads KMSKS. An ATP-binding site is contributed by Lys-593.

The protein belongs to the class-I aminoacyl-tRNA synthetase family. IleS type 2 subfamily. As to quaternary structure, monomer. It depends on Zn(2+) as a cofactor.

Its subcellular location is the cytoplasm. It carries out the reaction tRNA(Ile) + L-isoleucine + ATP = L-isoleucyl-tRNA(Ile) + AMP + diphosphate. Catalyzes the attachment of isoleucine to tRNA(Ile). As IleRS can inadvertently accommodate and process structurally similar amino acids such as valine, to avoid such errors it has two additional distinct tRNA(Ile)-dependent editing activities. One activity is designated as 'pretransfer' editing and involves the hydrolysis of activated Val-AMP. The other activity is designated 'posttransfer' editing and involves deacylation of mischarged Val-tRNA(Ile). In Bacillus cereus (strain ZK / E33L), this protein is Isoleucine--tRNA ligase 2.